A 333-amino-acid polypeptide reads, in one-letter code: Lipoyl synthase (333 aa).

Residues 1–29 (MTDSAAGATEVATPATPSNKPYDATAKQK) are disordered. The [4Fe-4S] cluster site is built by Cys-80, Cys-85, Cys-91, Cys-106, Cys-110, Cys-113, and Ser-320. The 219-residue stretch at 91–309 (CFGKGTATFM…EEKAYEMGFT (219 aa)) folds into the Radical SAM core domain.

This sequence belongs to the radical SAM superfamily. Lipoyl synthase family. Requires [4Fe-4S] cluster as cofactor.

The protein resides in the cytoplasm. The catalysed reaction is [[Fe-S] cluster scaffold protein carrying a second [4Fe-4S](2+) cluster] + N(6)-octanoyl-L-lysyl-[protein] + 2 oxidized [2Fe-2S]-[ferredoxin] + 2 S-adenosyl-L-methionine + 4 H(+) = [[Fe-S] cluster scaffold protein] + N(6)-[(R)-dihydrolipoyl]-L-lysyl-[protein] + 4 Fe(3+) + 2 hydrogen sulfide + 2 5'-deoxyadenosine + 2 L-methionine + 2 reduced [2Fe-2S]-[ferredoxin]. It participates in protein modification; protein lipoylation via endogenous pathway; protein N(6)-(lipoyl)lysine from octanoyl-[acyl-carrier-protein]: step 2/2. In terms of biological role, catalyzes the radical-mediated insertion of two sulfur atoms into the C-6 and C-8 positions of the octanoyl moiety bound to the lipoyl domains of lipoate-dependent enzymes, thereby converting the octanoylated domains into lipoylated derivatives. This is Lipoyl synthase from Ralstonia pickettii (strain 12J).